Here is a 255-residue protein sequence, read N- to C-terminus: 3-deoxy-manno-octulosonate cytidylyltransferase (255 aa).

The protein belongs to the KdsB family.

The protein localises to the cytoplasm. It catalyses the reaction 3-deoxy-alpha-D-manno-oct-2-ulosonate + CTP = CMP-3-deoxy-beta-D-manno-octulosonate + diphosphate. It functions in the pathway nucleotide-sugar biosynthesis; CMP-3-deoxy-D-manno-octulosonate biosynthesis; CMP-3-deoxy-D-manno-octulosonate from 3-deoxy-D-manno-octulosonate and CTP: step 1/1. It participates in bacterial outer membrane biogenesis; lipopolysaccharide biosynthesis. In terms of biological role, activates KDO (a required 8-carbon sugar) for incorporation into bacterial lipopolysaccharide in Gram-negative bacteria. This Polaromonas sp. (strain JS666 / ATCC BAA-500) protein is 3-deoxy-manno-octulosonate cytidylyltransferase.